A 35-amino-acid chain; its full sequence is uncharacterized protein (35 aa).

This is an uncharacterized protein from Haloarcula hispanica (His1V).